The primary structure comprises 346 residues: Holliday junction branch migration complex subunit RuvB (346 aa).

Residues 2-183 are large ATPase domain (RuvB-L); the sequence is TDDRIIGAGA…FGIVQRLEFY (182 aa). Residues Ile22, Arg23, Gly64, Lys67, Thr68, Thr69, 130-132, Arg173, Tyr183, and Arg220 contribute to the ATP site; that span reads EDF. A Mg(2+)-binding site is contributed by Thr68. The interval 184 to 254 is small ATPAse domain (RuvB-S); sequence SVEELTRIVR…VAQAAMKMLK (71 aa). The head domain (RuvB-H) stretch occupies residues 257-346; that stretch reads PEGFDELDRR…DLFAEVPDVG (90 aa). DNA contacts are provided by Arg293, Arg312, and Arg317.

Belongs to the RuvB family. As to quaternary structure, homohexamer. Forms an RuvA(8)-RuvB(12)-Holliday junction (HJ) complex. HJ DNA is sandwiched between 2 RuvA tetramers; dsDNA enters through RuvA and exits via RuvB. An RuvB hexamer assembles on each DNA strand where it exits the tetramer. Each RuvB hexamer is contacted by two RuvA subunits (via domain III) on 2 adjacent RuvB subunits; this complex drives branch migration. In the full resolvosome a probable DNA-RuvA(4)-RuvB(12)-RuvC(2) complex forms which resolves the HJ.

Its subcellular location is the cytoplasm. The enzyme catalyses ATP + H2O = ADP + phosphate + H(+). Its function is as follows. The RuvA-RuvB-RuvC complex processes Holliday junction (HJ) DNA during genetic recombination and DNA repair, while the RuvA-RuvB complex plays an important role in the rescue of blocked DNA replication forks via replication fork reversal (RFR). RuvA specifically binds to HJ cruciform DNA, conferring on it an open structure. The RuvB hexamer acts as an ATP-dependent pump, pulling dsDNA into and through the RuvAB complex. RuvB forms 2 homohexamers on either side of HJ DNA bound by 1 or 2 RuvA tetramers; 4 subunits per hexamer contact DNA at a time. Coordinated motions by a converter formed by DNA-disengaged RuvB subunits stimulates ATP hydrolysis and nucleotide exchange. Immobilization of the converter enables RuvB to convert the ATP-contained energy into a lever motion, pulling 2 nucleotides of DNA out of the RuvA tetramer per ATP hydrolyzed, thus driving DNA branch migration. The RuvB motors rotate together with the DNA substrate, which together with the progressing nucleotide cycle form the mechanistic basis for DNA recombination by continuous HJ branch migration. Branch migration allows RuvC to scan DNA until it finds its consensus sequence, where it cleaves and resolves cruciform DNA. The sequence is that of Holliday junction branch migration complex subunit RuvB from Stenotrophomonas maltophilia (strain R551-3).